The following is a 152-amino-acid chain: Globin CTT-E/E' (152 aa).

Positions Met1–Ala15 are cleaved as a signal peptide. The 137-residue stretch at Leu16–Met152 folds into the Globin domain. The heme b site is built by His73 and His102.

It belongs to the globin family.

This Chironomus thummi thummi (Midge) protein is Globin CTT-E/E' (CTT-E).